The primary structure comprises 430 residues: MAQLQAVKGTRDIFPDEIARWHYVEGVIRSVAELYGFSEVRTPVFEYTELFQRGIGATTDIVGKEMFTFQPDPNGRSLTLRPEMTAGVMRACLQKNLLSQSPVSKLYYISDLFRKERPQAGRQRQFTQFGAELLGVSNPAAVAEVLTFMMQVFSSLGLHGLRLRINSLGDLDDRARYREALRDYFMPYQNDLDEPSKERLEKNPLRILDSKNPALQEMIAGAPRLYASLKPESVADFEKVLSYLDDRQIAYDVDHLLVRGLDYYCHAAFEVTSSELGAQDAIGGGGRYDGLARELGASNDLPAVGFAVGMERLMIAMEKQGLFATLNPHGPLVYVVVQQKELTDHAMQVAFRLRKSGLKTEIDLAGRSMKAQMRDANRMGAAYALFIGQSEMESGHYALKNLETSEQTSLDLDAIIEVLHEAVSQESARP.

It belongs to the class-II aminoacyl-tRNA synthetase family. As to quaternary structure, homodimer.

The protein localises to the cytoplasm. It carries out the reaction tRNA(His) + L-histidine + ATP = L-histidyl-tRNA(His) + AMP + diphosphate + H(+). This chain is Histidine--tRNA ligase, found in Chlorobaculum parvum (strain DSM 263 / NCIMB 8327) (Chlorobium vibrioforme subsp. thiosulfatophilum).